A 47-amino-acid polypeptide reads, in one-letter code: Fasciclin-like arabinogalactan protein (47 aa).

The 47-residue stretch at 1–47 (APTPATLNGLTIFAPNDEAFKATGVPDLSKLSNAPMVSLLQYHAAAR) folds into the FAS1 domain.

This sequence belongs to the fasciclin-like AGP family.

Functionally, may be a cell surface adhesion protein. The sequence is that of Fasciclin-like arabinogalactan protein from Jatropha curcas (Barbados nut).